Reading from the N-terminus, the 142-residue chain is 3-hydroxyacyl-[acyl-carrier-protein] dehydratase FabZ (142 aa).

Residue His49 is part of the active site.

Belongs to the thioester dehydratase family. FabZ subfamily.

Its subcellular location is the cytoplasm. The enzyme catalyses a (3R)-hydroxyacyl-[ACP] = a (2E)-enoyl-[ACP] + H2O. Involved in unsaturated fatty acids biosynthesis. Catalyzes the dehydration of short chain beta-hydroxyacyl-ACPs and long chain saturated and unsaturated beta-hydroxyacyl-ACPs. The protein is 3-hydroxyacyl-[acyl-carrier-protein] dehydratase FabZ of Clostridium novyi (strain NT).